We begin with the raw amino-acid sequence, 159 residues long: Phospholipase A2 AP-PLA2-I (159 aa).

Residues 1–19 form the signal peptide; sequence MNFLVVIVTTVSLAGAASA. Residues 20–23 constitute a propeptide that is removed on maturation; it reads GEIQ. 6 cysteine pairs are disulfide-bonded: C51–C159, C53–C69, C68–C139, C75–C132, C85–C125, and C110–C130. Ca(2+) is bound by residues Y52, G54, and G56. Residue H72 is part of the active site. Position 73 (D73) interacts with Ca(2+). The active site involves D133.

This sequence belongs to the phospholipase A2 family. Group I subfamily. In terms of assembly, homodimer. It depends on Ca(2+) as a cofactor. As to expression, expressed by the venom gland.

It is found in the secreted. It carries out the reaction a 1,2-diacyl-sn-glycero-3-phosphocholine + H2O = a 1-acyl-sn-glycero-3-phosphocholine + a fatty acid + H(+). In terms of biological role, starfish phospholipase A2 (PLA2) that has hemorrhagic and capillary permeability-increasing activities and hence is considered to be deeply involved in the local inflammation. Shows hemolytic activity only in the presence of phosphatidylcholine (PC). PLA2 catalyzes the calcium-dependent hydrolysis of the 2-acyl groups in 3-sn-phosphoglycerides. The chain is Phospholipase A2 AP-PLA2-I from Acanthaster planci (Crown-of-thorns starfish).